The chain runs to 462 residues: Metal cation symporter ZIP8 (462 aa).

The signal sequence occupies residues 1–19 (MAPGRAVAGLLLLAATGLG). At 20 to 132 (RPSEGPELAF…PSFSEVWGYG (113 aa)) the chain is on the extracellular side. N-linked (GlcNAc...) asparagine glycosylation is found at Asn40, Asn88, and Asn96. Residues 133–153 (FLSVTIINLASLLGLILTPLI) traverse the membrane as a helical segment. The Cytoplasmic portion of the chain corresponds to 154-160 (KKSYFPK). Residues 161-181 (ILTYFVGLAIGTLFSNAIFQL) form a helical membrane-spanning segment. The Extracellular segment spans residues 182-191 (IPEAFGFNPK). A helical transmembrane segment spans residues 192–212 (IDNYVEKAVAVFGGFYMLFFV). The Cytoplasmic segment spans residues 213 to 367 (ERTLKMLLKT…LNAGMSTRQA (155 aa)). The short motif at 345–350 (EEFPHE) is the XEXPHE-motif element. Residues 368 to 388 (LLFNFLSACSCYVGLAFGILV) form a helical membrane-spanning segment. Residues 389 to 390 (GN) are Extracellular-facing. Residues 391-411 (NFAPNIIFALAGGMFLYISLA) form a helical membrane-spanning segment. The Cytoplasmic segment spans residues 412–431 (DMFPEMNDMLREKVTGRQTD). A helical membrane pass occupies residues 432 to 452 (FTFFMIQNAGMLTGFTAILLI). Topologically, residues 453-462 (TLYAGDIELQ) are extracellular.

It belongs to the ZIP transporter (TC 2.A.5) family. As to quaternary structure, homodimer. Post-translationally, N-glycosylated. N-glycosylation is not required for proper iron and zinc transport.

The protein localises to the cell membrane. It is found in the lysosome membrane. Its subcellular location is the apical cell membrane. It localises to the basolateral cell membrane. It catalyses the reaction Zn(2+)(out) + 2 hydrogencarbonate(out) = Zn(2+)(in) + 2 hydrogencarbonate(in). The catalysed reaction is selenite(out) + Zn(2+)(out) + hydrogencarbonate(out) = selenite(in) + Zn(2+)(in) + hydrogencarbonate(in). It carries out the reaction Mn(2+)(out) + 2 hydrogencarbonate(out) = Mn(2+)(in) + 2 hydrogencarbonate(in). The enzyme catalyses Fe(2+)(out) + 2 hydrogencarbonate(out) = Fe(2+)(in) + 2 hydrogencarbonate(in). It catalyses the reaction Cd(2+)(out) + 2 hydrogencarbonate(out) = Cd(2+)(in) + 2 hydrogencarbonate(in). The catalysed reaction is Co(2+)(out) + 2 hydrogencarbonate(out) = Co(2+)(in) + 2 hydrogencarbonate(in). Its function is as follows. Electroneutral divalent metal cation:bicarbonate symporter of the plasma membrane mediating the cellular uptake of zinc and manganese, two divalent metal cations important for development, tissue homeostasis and immunity. Transports an electroneutral complex composed of a divalent metal cation and two bicarbonate anions or alternatively a bicarbonate and a selenite anion. Thereby, it also contributes to the cellular uptake of selenium, an essential trace metal and micronutrient. Also imports cadmium a non-essential metal which is cytotoxic and carcinogenic. May also transport iron and cobalt through membranes. Through zinc import, indirectly regulates the metal-dependent transcription factor MTF1 and the expression of some metalloproteases involved in cartilage catabolism and also probably heart development. Also indirectly regulates the expression of proteins involved in cell morphology and cytoskeleton organization. Indirectly controls innate immune function and inflammatory response by regulating zinc cellular uptake which in turn modulates the expression of genes specific of these processes. Protects, for instance, cells from injury and death at the onset of inflammation. By regulating zinc influx into monocytes also directly modulates their adhesion to endothelial cells and arteries. Reclaims manganese from the bile at the apical membrane of hepatocytes, thereby regulating the activity of the manganese-dependent enzymes through the systemic levels of the nutrient. Also participates in manganese reabsorption in the proximal tubule of the kidney. By mediating the extracellular uptake of manganese by cells of the blood-brain barrier, may also play a role in the transport of the micronutrient to the brain. With manganese cellular uptake also participates in mitochondrial proper function. Finally, also probably functions intracellularly, translocating zinc from lysosome to cytosol to indirectly enhance the expression of specific genes during TCR-mediated T cell activation. The chain is Metal cation symporter ZIP8 from Rattus norvegicus (Rat).